A 204-amino-acid chain; its full sequence is Lipoprotein signal peptidase (204 aa).

The tract at residues Met1–Thr42 is disordered. A compositionally biased stretch (basic and acidic residues) spans Gly20 to Thr42. A run of 3 helical transmembrane segments spans residues Val50–Val70, Phe100–Ala120, and Leu126–Leu146. Residues Asp163 and Asp177 contribute to the active site. The helical transmembrane segment at Phe170–Leu190 threads the bilayer.

Belongs to the peptidase A8 family.

Its subcellular location is the cell membrane. The enzyme catalyses Release of signal peptides from bacterial membrane prolipoproteins. Hydrolyzes -Xaa-Yaa-Zaa-|-(S,diacylglyceryl)Cys-, in which Xaa is hydrophobic (preferably Leu), and Yaa (Ala or Ser) and Zaa (Gly or Ala) have small, neutral side chains.. Its pathway is protein modification; lipoprotein biosynthesis (signal peptide cleavage). In terms of biological role, this protein specifically catalyzes the removal of signal peptides from prolipoproteins. This Streptomyces coelicolor (strain ATCC BAA-471 / A3(2) / M145) protein is Lipoprotein signal peptidase.